The following is a 461-amino-acid chain: Glucan endo-1,3-beta-glucosidase (461 aa).

An N-terminal signal peptide occupies residues 1-23 (MPLLILLMLLAAGAAGAESATPS). Glu-123 (proton donor) is an active-site residue. Glu-265 acts as the Nucleophile in catalysis. The interval 350–375 (GASVAPTPSPNPSPNPSPKPAPSGGG) is disordered. A compositionally biased stretch (pro residues) spans 356–370 (TPSPNPSPNPSPKPA). Residues Cys-378 and Cys-439 are joined by a disulfide bond.

The protein belongs to the glycosyl hydrolase 17 family. Post-translationally, contains two additional disulfide bonds.

The enzyme catalyses Hydrolysis of (1-&gt;3)-beta-D-glucosidic linkages in (1-&gt;3)-beta-D-glucans.. Is thought to be an important plant defense-related product against fungal pathogens. This Triticum aestivum (Wheat) protein is Glucan endo-1,3-beta-glucosidase (GLC1).